A 152-amino-acid polypeptide reads, in one-letter code: Putative aluminum-activated malate transporter 11 (152 aa).

Transmembrane regions (helical) follow at residues Val48–Glu68 and Ala78–Leu98.

The protein belongs to the aromatic acid exporter (TC 2.A.85) family.

It localises to the membrane. Malate transporter. The protein is Putative aluminum-activated malate transporter 11 (ALMT11) of Arabidopsis thaliana (Mouse-ear cress).